An 863-amino-acid chain; its full sequence is MICAL-like protein 1 (863 aa).

Positions 2-108 constitute a Calponin-homology (CH) domain; sequence AGPRGALLAW…YVSQYYNHFC (107 aa). 2 disordered regions span residues 119 to 162 and 224 to 670; these read RKGL…TPSS and GTRS…PLIK. Residues 125 to 135 are compositionally biased toward pro residues; the sequence is CSPPSVAPTPV. 2 stretches are compositionally biased toward low complexity: residues 143–159 and 224–244; these read GEEL…TGQT and GTRS…HQQQ. The 64-residue stretch at 162-225 folds into the LIM zinc-binding domain; sequence STCAACQQHV…EHCARLGPGT (64 aa). A phosphoserine mark is found at S295 and S309. T318 bears the Phosphothreonine mark. Over residues 325–340 the composition is skewed to polar residues; that stretch reads LQQENLVEQAGSSSLV. Pro residues predominate over residues 384–395; that stretch reads APLPPSSSPGPP. The residue at position 391 (S391) is a Phosphoserine. The NPF1 motif lies at 425-427; it reads NPF. Acidic residues predominate over residues 427–438; the sequence is FEEEEEDKEEEA. Positions 439–450 are enriched in low complexity; that stretch reads PAAPSLATSPAL. Phosphothreonine occurs at positions 467 and 469. Phosphoserine is present on residues S470, S471, S484, and S486. 3 stretches are compositionally biased toward low complexity: residues 482-495, 505-520, and 553-566; these read APSA…ASRL, PSPA…ESAS, and SLST…SGEL. Phosphoserine occurs at positions 578 and 621. The short motif at 633-635 is the NPF2 element; that stretch reads NPF. A compositionally biased stretch (low complexity) spans 638-656; the sequence is KPSPAASPATKKATKGSKP. The tract at residues 652–863 is mediates the interaction with RAB13 and RAB35 and intramolecular interaction with the CH domain; that stretch reads KGSKPVRPPA…AKSKSPRDKS (212 aa). The 148-residue stretch at 671–818 folds into the bMERB domain; the sequence is RKVQADQYIP…EEEEDKMLEA (148 aa). A coiled-coil region spans residues 682–711; it reads EDIHGEMDTIERRLDALEHRGVLLEEKLRG. The interval 700–863 is necessary and sufficient to associate with tubular recycling endosome membranes, mediate phosphatidic acid-binding and membrane tubulation; it reads HRGVLLEEKL…AKSKSPRDKS (164 aa). A Phosphoserine modification is found at S740. A coiled-coil region spans residues 785–830; sequence MQELVTLIEQRNAIINCLDEDRQREEEEDKMLEAMIKKKEFQREAE.

In terms of assembly, homooligomer. Interacts (via NPF1 motif) with EHD1 (via EH domain); the interaction is direct and probably recruits EHD1 to membranes. Interacts with EHD3 (via EH domain). Interacts with RAB35 (GTP-bound form); the interaction is direct and probably recruits MICALL1 to membranes. Interacts with ACAP2; the interaction is indirect through RAB35. Interacts with RAB8A (GTP-bound form); regulates RAB8A association with recycling endosomes. Interacts with RAB13 (GTP-bound form). Interacts with ARF6 (GTP-bound form). Interacts with PACSIN2 (via the SH3 domain). Interacts with DPYSL2.

The protein localises to the recycling endosome membrane. Its subcellular location is the late endosome membrane. It localises to the cell projection. It is found in the cilium membrane. The protein resides in the cytoplasm. The protein localises to the cytoskeleton. Its subcellular location is the microtubule organizing center. It localises to the centrosome. It is found in the centriole. In terms of biological role, lipid-binding protein with higher affinity for phosphatidic acid, a lipid enriched in recycling endosome membranes. On endosome membranes, acts as a downstream effector of Rab proteins recruiting cytosolic proteins to regulate membrane tubulation. Involved in a late step of receptor-mediated endocytosis regulating for instance endocytosed-EGF receptor trafficking. Alternatively, regulates slow endocytic recycling of endocytosed proteins back to the plasma membrane. Also involved in cargo protein delivery to the plasma membrane. Plays a role in ciliogenesis coordination, recruits EHD1 to primary cilium where it is anchored to the centriole through interaction with tubulins. May indirectly play a role in neurite outgrowth. The polypeptide is MICAL-like protein 1 (MICALL1) (Homo sapiens (Human)).